Reading from the N-terminus, the 196-residue chain is uncharacterized protein (196 aa).

This is an uncharacterized protein from Acanthamoeba polyphaga mimivirus (APMV).